The primary structure comprises 308 residues: Pantoate--beta-alanine ligase (308 aa).

Position 2 (Ala2) is a propeptide, removed; partial.

It belongs to the pantothenate synthetase family. In terms of assembly, homodimer. Expressed at low levels in leaf and root.

Its subcellular location is the cytoplasm. It catalyses the reaction (R)-pantoate + beta-alanine + ATP = (R)-pantothenate + AMP + diphosphate + H(+). It functions in the pathway cofactor biosynthesis; (R)-pantothenate biosynthesis; (R)-pantothenate from (R)-pantoate and beta-alanine: step 1/1. The chain is Pantoate--beta-alanine ligase (PANC) from Lotus japonicus (Lotus corniculatus var. japonicus).